The chain runs to 149 residues: MAHIFVYGTLKRGQPNHKVMLDQSHGLATFRGRGCTVESFPLVIAGEHNIPWLLHLPGKGHCVAGEIYEVDEQMLRFLDDFEGCPSMYQRTALQVRVLEWEGAGGPGDSVQCFVYSTATYAPEWLFLPYHKNYDSEGPHGLRYNPRENR.

Residue 7 to 10 (YGTL) participates in substrate binding. Catalysis depends on E82, which acts as the Proton acceptor.

It belongs to the gamma-glutamylcyclotransferase family. As to quaternary structure, monomer.

The catalysed reaction is epsilon-(gamma-L-glutamyl)-L-lysine = 5-oxo-L-proline + L-lysine. Contributes to degradation of proteins cross-linked by transglutaminases by degrading the cross-link between a lysine and a glutamic acid residue. Catalyzes the formation of 5-oxo-L-proline from L-gamma-glutamyl-L-epsilon-lysine. Inactive with L-gamma-glutamyl-alpha-amino acid substrates such as L-gamma-glutamyl-L-alpha-cysteine and L-gamma-glutamyl-L-alpha-alanine. The chain is Gamma-glutamylaminecyclotransferase (Ggact) from Rattus norvegicus (Rat).